The primary structure comprises 315 residues: L-lactate dehydrogenase (315 aa).

Valine 14, aspartate 35, and tyrosine 66 together coordinate NAD(+). Substrate-binding positions include glutamine 83, arginine 89, and 121–124; that span reads NPVD. NAD(+)-binding positions include 119 to 121 and serine 144; that span reads VAN. 149-152 provides a ligand contact to substrate; it reads DTAR. Histidine 176 (proton acceptor) is an active-site residue. Position 221 is a phosphotyrosine (tyrosine 221). Threonine 230 lines the substrate pocket.

This sequence belongs to the LDH/MDH superfamily. LDH family. As to quaternary structure, homotetramer.

The protein localises to the cytoplasm. The enzyme catalyses (S)-lactate + NAD(+) = pyruvate + NADH + H(+). The protein operates within fermentation; pyruvate fermentation to lactate; (S)-lactate from pyruvate: step 1/1. Functionally, catalyzes the conversion of lactate to pyruvate. This is L-lactate dehydrogenase from Mesomycoplasma hyopneumoniae (strain 7448) (Mycoplasma hyopneumoniae).